The chain runs to 74 residues: uncharacterized protein (74 aa).

Composition is skewed to basic and acidic residues over residues 1-13 (MKKQ…HQLK) and 20-60 (IKAK…KSFE). Residues 1–74 (MKKQKSIDKH…ESQMDWHQYK (74 aa)) form a disordered region. The segment covering 64–74 (NESQMDWHQYK) has biased composition (polar residues).

This is an uncharacterized protein from Bacillus subtilis (strain 168).